A 559-amino-acid polypeptide reads, in one-letter code: Hepatocyte nuclear factor 1-beta-A (559 aa).

Residues 1-35 are dimerization; it reads MFANMVSKLTSLQQELLSALLDSGVTKDVLLQALE. In terms of domain architecture, HNF-p1 spans 5 to 36; sequence MVSKLTSLQQELLSALLDSGVTKDVLLQALED. The segment at 53-98 is disordered; it reads MSPSGSKLSDTDSKPVFHTLTNGHSKGKLSGDEGSEDGDDYDTPPI. Acidic residues predominate over residues 85–94; it reads EGSEDGDDYD. One can recognise a POU-specific atypical domain in the interval 100–195; sequence KELQSQNTEE…ILRQFNQATQ (96 aa). The homeobox; HNF1-type DNA-binding region spans 240–320; sequence LRRNRFKWGP…NRRKEEAFRQ (81 aa). 2 stretches are compositionally biased toward low complexity: residues 334 to 354 and 370 to 381; these read LNSLLSHSSPHHPQTSSSPPS and TSSTTINHHSSN. Positions 334–384 are disordered; the sequence is LNSLLSHSSPHHPQTSSSPPSKMQGVRYSQQGPGEVTSSTTINHHSSNAMS.

Belongs to the HNF1 homeobox family. In terms of assembly, binds DNA as a dimer. Can form homodimer or heterodimer with HNF1-alpha. In terms of tissue distribution, during embryonic development, expressed dynamically in the developing hindbrain, kidney (pronephros), gut, liver and pancreas; expressed in both intermediate mesoderm (precursor to the kidney) and the caudal hindbrain (including rhombomeres r5 and r6) at 10 hpf with expression diminishing caudally by 14 hpf. Strongly expressed in adult kidney, gut, liver and swim bladder; weakly expressed in brain, eye, testis, ovary and heart.

The protein localises to the nucleus. Transcription factor that binds to the inverted palindrome 5'-GTTAATNATTAAC-3'. Required for induction of rhombomere r5/r6 gene expression in the hindbrain. The protein is Hepatocyte nuclear factor 1-beta-A (hnf1ba) of Danio rerio (Zebrafish).